The sequence spans 223 residues: 7-cyano-7-deazaguanine synthase (223 aa).

8–18 is an ATP binding site; sequence LSGGLDSATTL. Zn(2+) contacts are provided by Cys187, Cys197, Cys200, and Cys203.

The protein belongs to the QueC family. It depends on Zn(2+) as a cofactor.

It carries out the reaction 7-carboxy-7-deazaguanine + NH4(+) + ATP = 7-cyano-7-deazaguanine + ADP + phosphate + H2O + H(+). Its pathway is purine metabolism; 7-cyano-7-deazaguanine biosynthesis. Catalyzes the ATP-dependent conversion of 7-carboxy-7-deazaguanine (CDG) to 7-cyano-7-deazaguanine (preQ(0)). In Methylococcus capsulatus (strain ATCC 33009 / NCIMB 11132 / Bath), this protein is 7-cyano-7-deazaguanine synthase.